The sequence spans 307 residues: Ribosomal protein L11 methyltransferase (307 aa).

Residues T156, G177, D199, and N243 each contribute to the S-adenosyl-L-methionine site.

Belongs to the methyltransferase superfamily. PrmA family.

It is found in the cytoplasm. It catalyses the reaction L-lysyl-[protein] + 3 S-adenosyl-L-methionine = N(6),N(6),N(6)-trimethyl-L-lysyl-[protein] + 3 S-adenosyl-L-homocysteine + 3 H(+). Functionally, methylates ribosomal protein L11. In Syntrophomonas wolfei subsp. wolfei (strain DSM 2245B / Goettingen), this protein is Ribosomal protein L11 methyltransferase.